The sequence spans 363 residues: Probable dual-specificity RNA methyltransferase RlmN (363 aa).

The active-site Proton acceptor is Glu99. Residues 105-341 (SENRMTACVS…VTVRKSHGAS (237 aa)) form the Radical SAM core domain. Residues Cys112 and Cys346 are joined by a disulfide bond. [4Fe-4S] cluster is bound by residues Cys119, Cys123, and Cys126. S-adenosyl-L-methionine contacts are provided by residues 171–172 (GE), Ser204, 227–229 (SLH), and Asn303. Cys346 functions as the S-methylcysteine intermediate in the catalytic mechanism.

Belongs to the radical SAM superfamily. RlmN family. Requires [4Fe-4S] cluster as cofactor.

Its subcellular location is the cytoplasm. It catalyses the reaction adenosine(2503) in 23S rRNA + 2 reduced [2Fe-2S]-[ferredoxin] + 2 S-adenosyl-L-methionine = 2-methyladenosine(2503) in 23S rRNA + 5'-deoxyadenosine + L-methionine + 2 oxidized [2Fe-2S]-[ferredoxin] + S-adenosyl-L-homocysteine. The enzyme catalyses adenosine(37) in tRNA + 2 reduced [2Fe-2S]-[ferredoxin] + 2 S-adenosyl-L-methionine = 2-methyladenosine(37) in tRNA + 5'-deoxyadenosine + L-methionine + 2 oxidized [2Fe-2S]-[ferredoxin] + S-adenosyl-L-homocysteine. Functionally, specifically methylates position 2 of adenine 2503 in 23S rRNA and position 2 of adenine 37 in tRNAs. This is Probable dual-specificity RNA methyltransferase RlmN from Chlorobium phaeobacteroides (strain DSM 266 / SMG 266 / 2430).